The sequence spans 2699 residues: UPF0648 protein C3H5.09c (2699 aa).

Asn21 carries N-linked (GlcNAc...) asparagine glycosylation. The chain crosses the membrane as a helical span at residues 24 to 44 (FVWVVIATGFLFHLVLFVLSY). Residues Asn288, Asn293, Asn334, Asn345, Asn433, Asn507, Asn551, Asn655, Asn760, Asn993, Asn1000, Asn1003, Asn1006, and Asn1009 are each glycosylated (N-linked (GlcNAc...) asparagine). Residues 975–1021 (KAKDPSPKSASESSSFYQNGSDIDDNDSNSSNTSNHTTENANAQQRK) are disordered. Over residues 981-995 (PKSASESSSFYQNGS) the composition is skewed to low complexity. Residues 1006-1033 (NTSNHTTENANAQQRKLEDLNRSFEDFL) are a coiled coil. Positions 1010 to 1019 (HTTENANAQQ) are enriched in polar residues. N-linked (GlcNAc...) asparagine glycans are attached at residues Asn1026, Asn1039, Asn1046, Asn1236, Asn1255, Asn1344, Asn1527, Asn1595, Asn1791, Asn1916, Asn2032, Asn2048, Asn2256, Asn2285, Asn2388, Asn2407, Asn2417, Asn2508, and Asn2622. Residues 1758 to 1818 (QYELLQKRRK…TLSDHYRLLE (61 aa)) are a coiled coil. Residues 2393–2447 (FPHIYSRNHDKRKENGSQGEADNSNYSGSLMRRRTNDQEEDALATPSSSRRDSRS) are disordered. Residues 2408 to 2420 (GSQGEADNSNYSG) show a composition bias toward polar residues. Disordered regions lie at residues 2606 to 2632 (AEEN…LNSP) and 2647 to 2676 (ADIV…ARVD). Residues 2617-2632 (SAISRNHSTRSSLNSP) are compositionally biased toward polar residues.

It belongs to the UPF0648 family.

The protein localises to the membrane. This Schizosaccharomyces pombe (strain 972 / ATCC 24843) (Fission yeast) protein is UPF0648 protein C3H5.09c.